The sequence spans 809 residues: E3 ubiquitin-protein ligase RSP5 (809 aa).

Positions Met-1–Ser-105 constitute a C2 domain. Disordered regions lie at residues Asp-99–Asn-122, Pro-139–Asp-240, and Trp-257–Ser-298. Residues Arg-108–Asn-122 show a composition bias toward basic and acidic residues. A compositionally biased stretch (polar residues) spans Pro-139–Pro-148. The span at Ser-149–Arg-183 shows a compositional bias: low complexity. Polar residues predominate over residues Gly-184 to Gly-196. Residues Thr-197–Arg-219 show a composition bias toward low complexity. 3 WW domains span residues Gly-229 to Leu-262, Gly-331 to Arg-364, and Gly-387 to Leu-420. Lys-258 participates in a covalent cross-link: Glycyl lysine isopeptide (Lys-Gly) (interchain with G-Cter in ubiquitin). An HECT domain is found at Tyr-705–Glu-809. The active-site Glycyl thioester intermediate is Cys-777.

This sequence belongs to the RSP5/NEDD4 family. As to quaternary structure, component of the RSP5-BUL1/2 ubiquitin ligase complex composed of at least RSP5 and BUL1 or BUL2. Component of the RSP5-UBA1-UBC5 ubiquitin ligase complex composed of E3 RSP5, E1 UBA1 and E2 UBC5. Also forms a ternary complex with RUP1 and UBP2. Interacts (via WW domains) with LSB1. Interacts (via WW domains) with PIN3/LSB2. Interacts (via WW domains) with RCR1 (via PY motifs). Interacts with UBP2; the interaction is direct. Interacts with HSE1. Interacts with LAS17. Interacts with ROG3. Interacts with ROD1. Interacts with RVS167. Interacts with ubiquitin. In terms of processing, the ubiquitination appears to be the result of an intramolecular transfer of ubiquitin.

It is found in the cytoplasm. Its subcellular location is the nucleus. The protein resides in the cytoskeleton. The protein localises to the actin patch. The enzyme catalyses S-ubiquitinyl-[E2 ubiquitin-conjugating enzyme]-L-cysteine + [acceptor protein]-L-lysine = [E2 ubiquitin-conjugating enzyme]-L-cysteine + N(6)-ubiquitinyl-[acceptor protein]-L-lysine.. It functions in the pathway protein modification; protein ubiquitination. Functionally, E3 ubiquitin-protein ligase which accepts ubiquitin from an E2 ubiquitin-conjugating enzyme in the form of a thioester and then directly transfers the ubiquitin to targeted substrates. Component of a RSP5 ubiquitin ligase complex which specifies polyubiquitination and intracellular trafficking of the general amino acid permease GAP1 as well as other cell surface proteins like GAP1, FUR4, MAL61, PMA1 and STE2. The RSP5-BUL1/2 complex is also necessary for the heat-shock element (HSE)-mediated gene expression, nitrogen starvation GLN3-dependent transcription, pressure-induced differential regulation of the two tryptophan permeases TAT1 and TAT2 and sorting efficiency into multivesicular bodies. The RSP5-UBA1-UBC5 ubiquitin ligase complex ubiquitinates RPO21 forming 'Lys-63'-linked polyubiquitin chains. Plays a role in tolerance to o-dinitrobenzene. Involved in actin cytoskeleton organization and dynamics. Ubiquitinates the LAS17-binding proteins LSB1 and PIN3/LSB2 without directing them for degradation and affects LAS17 levels in a SLA1-dependent and LSB1/2-independent manner. Also involved in the degradation of non-functional 18S rRNAs in response to stalled ribosomes by mediating polyubiquitination of monoubiquitinated RPS3/uS3: mediates formation of 'Lys-63'-linked polyubiquitin chains on monoubiquitined RPS3/uS3, promoting the degradation of non-functional 18S rRNAs. The chain is E3 ubiquitin-protein ligase RSP5 (RSP5) from Saccharomyces cerevisiae (strain ATCC 204508 / S288c) (Baker's yeast).